A 361-amino-acid polypeptide reads, in one-letter code: Phospho-N-acetylmuramoyl-pentapeptide-transferase (361 aa).

A run of 10 helical transmembrane segments spans residues 28–48 (LAII…IKFL), 74–94 (TMGG…LADL), 99–119 (IWIT…DDYA), 133–153 (SKLL…EYTD), 168–188 (LSLD…VGSS), 203–223 (VPIA…GNLI), 236–256 (TGEL…FLWF), 263–283 (VFMG…ISVI), 288–308 (VVLS…ILQV), and 338–358 (KVVI…LSSL).

Belongs to the glycosyltransferase 4 family. MraY subfamily. It depends on Mg(2+) as a cofactor.

It localises to the cell inner membrane. It catalyses the reaction UDP-N-acetyl-alpha-D-muramoyl-L-alanyl-gamma-D-glutamyl-meso-2,6-diaminopimeloyl-D-alanyl-D-alanine + di-trans,octa-cis-undecaprenyl phosphate = di-trans,octa-cis-undecaprenyl diphospho-N-acetyl-alpha-D-muramoyl-L-alanyl-D-glutamyl-meso-2,6-diaminopimeloyl-D-alanyl-D-alanine + UMP. Its pathway is cell wall biogenesis; peptidoglycan biosynthesis. Catalyzes the initial step of the lipid cycle reactions in the biosynthesis of the cell wall peptidoglycan: transfers peptidoglycan precursor phospho-MurNAc-pentapeptide from UDP-MurNAc-pentapeptide onto the lipid carrier undecaprenyl phosphate, yielding undecaprenyl-pyrophosphoryl-MurNAc-pentapeptide, known as lipid I. The polypeptide is Phospho-N-acetylmuramoyl-pentapeptide-transferase (Rickettsia canadensis (strain McKiel)).